The sequence spans 324 residues: NADH-ubiquinone oxidoreductase chain 1 (324 aa).

8 consecutive transmembrane segments (helical) span residues 9-29 (LINPLAYIVPVLLAVAFLTLL), 76-96 (LFLVTPMLALTLAMTLWAPMP), 106-126 (LGVLFILALSSLAVYSILGSG), 146-166 (ISYEVSLGLILRSIIIFWGGY), 177-197 (ALWLLLPACPLAAMWYISTLA), 228-248 (LLFLAEYANILLMNTLSAILF), 259-279 (ELTTINLMTKAALLSVVFLWV), and 299-319 (FLPLTLALVLWHTALPIAFAG).

This sequence belongs to the complex I subunit 1 family.

Its subcellular location is the mitochondrion inner membrane. The catalysed reaction is a ubiquinone + NADH + 5 H(+)(in) = a ubiquinol + NAD(+) + 4 H(+)(out). In terms of biological role, core subunit of the mitochondrial membrane respiratory chain NADH dehydrogenase (Complex I) that is believed to belong to the minimal assembly required for catalysis. Complex I functions in the transfer of electrons from NADH to the respiratory chain. The immediate electron acceptor for the enzyme is believed to be ubiquinone. In Formosania lacustris (Oriental stream loach), this protein is NADH-ubiquinone oxidoreductase chain 1 (MT-ND1).